The chain runs to 164 residues: SsrA-binding protein (164 aa).

The segment at 143-164 is disordered; that stretch reads HDKRQDEKQKSIKKEINSVLKR. The segment covering 145 to 158 has biased composition (basic and acidic residues); that stretch reads KRQDEKQKSIKKEI.

This sequence belongs to the SmpB family.

The protein resides in the cytoplasm. Functionally, required for rescue of stalled ribosomes mediated by trans-translation. Binds to transfer-messenger RNA (tmRNA), required for stable association of tmRNA with ribosomes. tmRNA and SmpB together mimic tRNA shape, replacing the anticodon stem-loop with SmpB. tmRNA is encoded by the ssrA gene; the 2 termini fold to resemble tRNA(Ala) and it encodes a 'tag peptide', a short internal open reading frame. During trans-translation Ala-aminoacylated tmRNA acts like a tRNA, entering the A-site of stalled ribosomes, displacing the stalled mRNA. The ribosome then switches to translate the ORF on the tmRNA; the nascent peptide is terminated with the 'tag peptide' encoded by the tmRNA and targeted for degradation. The ribosome is freed to recommence translation, which seems to be the essential function of trans-translation. This is SsrA-binding protein from Prochlorococcus marinus (strain MIT 9312).